A 103-amino-acid polypeptide reads, in one-letter code: Small ribosomal subunit protein bS20 (103 aa).

The segment covering 1–20 (MATAKPKKKNPRLASGRKRV) has biased composition (basic residues). Residues 1–31 (MATAKPKKKNPRLASGRKRVRQDTKLNAANT) are disordered.

The protein belongs to the bacterial ribosomal protein bS20 family.

Binds directly to 16S ribosomal RNA. The chain is Small ribosomal subunit protein bS20 from Polaromonas sp. (strain JS666 / ATCC BAA-500).